A 142-amino-acid polypeptide reads, in one-letter code: Large ribosomal subunit protein mL42 (142 aa).

A mitochondrion-targeting transit peptide spans 1-32; sequence MAVAAVKWVMSKRTILKHLFPVQNGALYCVCH.

This sequence belongs to the mitochondrion-specific ribosomal protein mL42 family. As to quaternary structure, component of the mitochondrial large ribosomal subunit (mt-LSU). Mature mammalian 55S mitochondrial ribosomes consist of a small (28S) and a large (39S) subunit. The 28S small subunit contains a 12S ribosomal RNA (12S mt-rRNA) and 30 different proteins. The 39S large subunit contains a 16S rRNA (16S mt-rRNA), a copy of mitochondrial valine transfer RNA (mt-tRNA(Val)), which plays an integral structural role, and 52 different proteins.

Its subcellular location is the mitochondrion. This chain is Large ribosomal subunit protein mL42 (MRPL42), found in Homo sapiens (Human).